A 325-amino-acid polypeptide reads, in one-letter code: Tetraacyldisaccharide 4'-kinase (325 aa).

ATP is bound at residue 55 to 62 (TAGGNGKT).

Belongs to the LpxK family.

It carries out the reaction a lipid A disaccharide + ATP = a lipid IVA + ADP + H(+). The protein operates within glycolipid biosynthesis; lipid IV(A) biosynthesis; lipid IV(A) from (3R)-3-hydroxytetradecanoyl-[acyl-carrier-protein] and UDP-N-acetyl-alpha-D-glucosamine: step 6/6. Functionally, transfers the gamma-phosphate of ATP to the 4'-position of a tetraacyldisaccharide 1-phosphate intermediate (termed DS-1-P) to form tetraacyldisaccharide 1,4'-bis-phosphate (lipid IVA). This Enterobacter sp. (strain 638) protein is Tetraacyldisaccharide 4'-kinase.